The sequence spans 64 residues: Translation machinery-associated protein 7 (64 aa).

A disordered region spans residues 1-64 (MSGREGGKKK…GSGIKKSGKK (64 aa)). The stretch at 21–50 (DMDDDDVAFKQKQKEDQKAMEALKARASGK) forms a coiled coil. Residues 27–44 (VAFKQKQKEDQKAMEALK) are compositionally biased toward basic and acidic residues.

The protein belongs to the TMA7 family.

The protein is Translation machinery-associated protein 7 (tma7) of Tetraodon nigroviridis (Spotted green pufferfish).